A 245-amino-acid chain; its full sequence is Ubiquinone/menaquinone biosynthesis C-methyltransferase UbiE (245 aa).

S-adenosyl-L-methionine-binding positions include Thr-71, Asp-92, and 118–119 (DA).

The protein belongs to the class I-like SAM-binding methyltransferase superfamily. MenG/UbiE family.

It catalyses the reaction a 2-demethylmenaquinol + S-adenosyl-L-methionine = a menaquinol + S-adenosyl-L-homocysteine + H(+). The enzyme catalyses a 2-methoxy-6-(all-trans-polyprenyl)benzene-1,4-diol + S-adenosyl-L-methionine = a 5-methoxy-2-methyl-3-(all-trans-polyprenyl)benzene-1,4-diol + S-adenosyl-L-homocysteine + H(+). The protein operates within quinol/quinone metabolism; menaquinone biosynthesis; menaquinol from 1,4-dihydroxy-2-naphthoate: step 2/2. Its pathway is cofactor biosynthesis; ubiquinone biosynthesis. Its function is as follows. Methyltransferase required for the conversion of demethylmenaquinol (DMKH2) to menaquinol (MKH2) and the conversion of 2-polyprenyl-6-methoxy-1,4-benzoquinol (DDMQH2) to 2-polyprenyl-3-methyl-6-methoxy-1,4-benzoquinol (DMQH2). The protein is Ubiquinone/menaquinone biosynthesis C-methyltransferase UbiE of Neisseria meningitidis serogroup A / serotype 4A (strain DSM 15465 / Z2491).